Reading from the N-terminus, the 238-residue chain is Ribonuclease PH (238 aa).

Residues arginine 86 and 124–126 each bind phosphate; that span reads GTR.

Belongs to the RNase PH family. Homohexameric ring arranged as a trimer of dimers.

The catalysed reaction is tRNA(n+1) + phosphate = tRNA(n) + a ribonucleoside 5'-diphosphate. Phosphorolytic 3'-5' exoribonuclease that plays an important role in tRNA 3'-end maturation. Removes nucleotide residues following the 3'-CCA terminus of tRNAs; can also add nucleotides to the ends of RNA molecules by using nucleoside diphosphates as substrates, but this may not be physiologically important. Probably plays a role in initiation of 16S rRNA degradation (leading to ribosome degradation) during starvation. The polypeptide is Ribonuclease PH (Mannheimia haemolytica (Pasteurella haemolytica)).